The following is a 745-amino-acid chain: Copper-transporting ATPase (745 aa).

An HMA domain is found at 1-67 (MKESFYIEGM…LIEKLGYSPK (67 aa)). The Cytoplasmic portion of the chain corresponds to 1–83 (MKESFYIEGM…KKEFFSPNVK (83 aa)). Cys12 and Cys15 together coordinate Cu cation. A helical membrane pass occupies residues 84–104 (LALAVIFTLFVVYLSMGAMLS). Over 105–124 (PSLLPESLLTINHHSNFLNA) the chain is Extracellular. Residues 125–144 (CLQLIGALIVMHLGRDFYIQ) form a helical membrane-spanning segment. Topologically, residues 145 to 151 (GFKALWH) are cytoplasmic. A helical transmembrane segment spans residues 152–172 (RQPNMSSLIAIGTSAALISSL). Over 173-194 (WQLYLVYTNHYTDQWSYGHYYF) the chain is Extracellular. Residues 195 to 215 (ESVCVILMFVMVGKRIENVSK) traverse the membrane as a helical segment. The Cytoplasmic portion of the chain corresponds to 216 to 343 (DKALDAMQAL…KAEISRLADK (128 aa)). Residues 344 to 366 (VSSVFVPSVIAIAVLAFVVWLII) traverse the membrane as a helical segment. Residues 367-379 (APKPDFWWNFRTA) are Extracellular-facing. A helical transmembrane segment spans residues 380–397 (LEVFVSVLVISCPCALGL). At 398–685 (ATPMSILVAN…KLSQATIKNI (288 aa)) the chain is on the cytoplasmic side. Asp435 functions as the 4-aspartylphosphate intermediate in the catalytic mechanism. Residues Asp631 and Asp635 each contribute to the Mg(2+) site. The chain crosses the membrane as a helical span at residues 686–705 (KENLFWAFCYNSVFIPLACG). Residues 706 to 716 (VLYKANIMLSP) are Extracellular-facing. Residues 717-735 (AIAGLAMSLSSVSVVLNSQ) traverse the membrane as a helical segment. Residues 736–745 (RLRNFKIKDH) are Cytoplasmic-facing.

Belongs to the cation transport ATPase (P-type) (TC 3.A.3) family. Type IB subfamily.

It localises to the cell membrane. It carries out the reaction Cu(2+)(in) + ATP + H2O = Cu(2+)(out) + ADP + phosphate + H(+). Its function is as follows. Probably involved in copper export. The polypeptide is Copper-transporting ATPase (copA) (Helicobacter pylori (strain J99 / ATCC 700824) (Campylobacter pylori J99)).